Reading from the N-terminus, the 297-residue chain is Golgi-associated RAB2 interactor protein 1A (297 aa).

Residues 226–257 (SNRHQTSRDRHTDTATETDNSGNCKSTPLVAS) are disordered. Over residues 240-257 (ATETDNSGNCKSTPLVAS) the composition is skewed to polar residues.

This sequence belongs to the GARIN family. In terms of assembly, interacts (via N-terminus) with RAB2B (in GTP-bound form). As to expression, expressed in testis (at protein level).

It is found in the golgi apparatus. Its function is as follows. RAB2B effector protein required for accurate acrosome formation and normal male fertility. This chain is Golgi-associated RAB2 interactor protein 1A, found in Mus musculus (Mouse).